The following is a 297-amino-acid chain: Pyridoxal 5'-phosphate synthase subunit PdxS (297 aa).

Aspartate 27 is a D-ribose 5-phosphate binding site. The active-site Schiff-base intermediate with D-ribose 5-phosphate is lysine 84. Glycine 156 provides a ligand contact to D-ribose 5-phosphate. Residue arginine 168 coordinates D-glyceraldehyde 3-phosphate. Residues glycine 217 and 238-239 (GS) contribute to the D-ribose 5-phosphate site.

The protein belongs to the PdxS/SNZ family. In terms of assembly, in the presence of PdxT, forms a dodecamer of heterodimers.

The catalysed reaction is aldehydo-D-ribose 5-phosphate + D-glyceraldehyde 3-phosphate + L-glutamine = pyridoxal 5'-phosphate + L-glutamate + phosphate + 3 H2O + H(+). It functions in the pathway cofactor biosynthesis; pyridoxal 5'-phosphate biosynthesis. Its function is as follows. Catalyzes the formation of pyridoxal 5'-phosphate from ribose 5-phosphate (RBP), glyceraldehyde 3-phosphate (G3P) and ammonia. The ammonia is provided by the PdxT subunit. Can also use ribulose 5-phosphate and dihydroxyacetone phosphate as substrates, resulting from enzyme-catalyzed isomerization of RBP and G3P, respectively. The protein is Pyridoxal 5'-phosphate synthase subunit PdxS of Corynebacterium diphtheriae (strain ATCC 700971 / NCTC 13129 / Biotype gravis).